The primary structure comprises 224 residues: Response regulator protein GraR (224 aa).

The Response regulatory domain maps to 2–115 (QILLVEDDNT…VLIAKLQAIY (114 aa)). Asp-51 is modified (4-aspartylphosphate). A DNA-binding region (ompR/PhoB-type) is located at residues 126-224 (KRTLTWQDAV…KVGKGYMAHE (99 aa)). Thr-128, Thr-130, and Thr-149 each carry phosphothreonine.

In terms of assembly, interacts with GraX. Post-translationally, phosphorylated by GraS. Phosphorylated by Stk1; phosphorylation increases the DNA-binding activity of GraR.

The protein resides in the cytoplasm. Member of the two-component regulatory system GraR/GraS involved in resistance against cationic antimicrobial peptides (CAMPs). Upon phosphorylation by GraS, functions as a transcription regulator by direct binding to promoter regions of target genes such as adhesins, exoproteins, transporters, toxins, and proteins involved in cell wall synthesis. Down-regulates the expression of many genes involved in RNA and amino acid synthesis or glycolysis. The polypeptide is Response regulator protein GraR (graR) (Staphylococcus aureus (strain MRSA252)).